Reading from the N-terminus, the 366-residue chain is MTLIRLLACLLFLPCLAQAGAVRLKDLVEFDGVRGNDLVGYGLVVGLNGTGDGLRNAPFTEEIMSNILERLGVNVTGEDFRPKNVAAVFVTAALPPFARVGSQIDITVSAIGDSKSLLGGTLIMTPLNAADGQIYAVAQGTVLAGGASAEGQAASVVQGVPTSGVIPAGARVEREIEFDLGSLTQLRLALREPDFTTAGRIETAVNSAFNGRVAVMRDSGTVELDIAATQARSPAHVIGRIENILVEPERKARVVVDQRSGTIVMGADVRISRVAVSQGSLTLRVEEAPIAVQPNPFADGDTVVVPRTNAEIEQEPGIKLAEVPESASLSDVVAGLNALGVSPRDMIDILKTIKAAGALHAEFVVR.

The N-terminal stretch at 1–19 (MTLIRLLACLLFLPCLAQA) is a signal peptide.

The protein belongs to the FlgI family. As to quaternary structure, the basal body constitutes a major portion of the flagellar organelle and consists of four rings (L,P,S, and M) mounted on a central rod.

The protein localises to the periplasm. Its subcellular location is the bacterial flagellum basal body. In terms of biological role, assembles around the rod to form the L-ring and probably protects the motor/basal body from shearing forces during rotation. The chain is Flagellar P-ring protein from Ruegeria pomeroyi (strain ATCC 700808 / DSM 15171 / DSS-3) (Silicibacter pomeroyi).